The primary structure comprises 343 residues: Holliday junction branch migration complex subunit RuvB (343 aa).

Positions 1–20 (MEEMASRMISGDPELGEPFQ) are disordered. Positions 1–185 (MEEMASRMIS…FGILARMQFY (185 aa)) are large ATPase domain (RuvB-L). ATP is bound by residues leucine 24, arginine 25, glycine 66, lysine 69, threonine 70, threonine 71, 132 to 134 (EDF), arginine 175, tyrosine 185, and arginine 222. A Mg(2+)-binding site is contributed by threonine 70. A small ATPAse domain (RuvB-S) region spans residues 186 to 256 (EPDELQQIVT…LADRALLALE (71 aa)). Positions 259 to 343 (RNGLDNMDHR…PRPVQQGTLL (85 aa)) are head domain (RuvB-H). Arginine 295, arginine 314, and arginine 319 together coordinate DNA.

This sequence belongs to the RuvB family. In terms of assembly, homohexamer. Forms an RuvA(8)-RuvB(12)-Holliday junction (HJ) complex. HJ DNA is sandwiched between 2 RuvA tetramers; dsDNA enters through RuvA and exits via RuvB. An RuvB hexamer assembles on each DNA strand where it exits the tetramer. Each RuvB hexamer is contacted by two RuvA subunits (via domain III) on 2 adjacent RuvB subunits; this complex drives branch migration. In the full resolvosome a probable DNA-RuvA(4)-RuvB(12)-RuvC(2) complex forms which resolves the HJ.

The protein localises to the cytoplasm. It carries out the reaction ATP + H2O = ADP + phosphate + H(+). In terms of biological role, the RuvA-RuvB-RuvC complex processes Holliday junction (HJ) DNA during genetic recombination and DNA repair, while the RuvA-RuvB complex plays an important role in the rescue of blocked DNA replication forks via replication fork reversal (RFR). RuvA specifically binds to HJ cruciform DNA, conferring on it an open structure. The RuvB hexamer acts as an ATP-dependent pump, pulling dsDNA into and through the RuvAB complex. RuvB forms 2 homohexamers on either side of HJ DNA bound by 1 or 2 RuvA tetramers; 4 subunits per hexamer contact DNA at a time. Coordinated motions by a converter formed by DNA-disengaged RuvB subunits stimulates ATP hydrolysis and nucleotide exchange. Immobilization of the converter enables RuvB to convert the ATP-contained energy into a lever motion, pulling 2 nucleotides of DNA out of the RuvA tetramer per ATP hydrolyzed, thus driving DNA branch migration. The RuvB motors rotate together with the DNA substrate, which together with the progressing nucleotide cycle form the mechanistic basis for DNA recombination by continuous HJ branch migration. Branch migration allows RuvC to scan DNA until it finds its consensus sequence, where it cleaves and resolves cruciform DNA. The sequence is that of Holliday junction branch migration complex subunit RuvB from Magnetococcus marinus (strain ATCC BAA-1437 / JCM 17883 / MC-1).